Reading from the N-terminus, the 294-residue chain is 4-hydroxy-tetrahydrodipicolinate synthase (294 aa).

Residue T46 participates in pyruvate binding. The active-site Proton donor/acceptor is Y134. K163 acts as the Schiff-base intermediate with substrate in catalysis. I205 contacts pyruvate.

The protein belongs to the DapA family. As to quaternary structure, homotetramer; dimer of dimers.

The protein localises to the cytoplasm. The catalysed reaction is L-aspartate 4-semialdehyde + pyruvate = (2S,4S)-4-hydroxy-2,3,4,5-tetrahydrodipicolinate + H2O + H(+). Its pathway is amino-acid biosynthesis; L-lysine biosynthesis via DAP pathway; (S)-tetrahydrodipicolinate from L-aspartate: step 3/4. Catalyzes the condensation of (S)-aspartate-beta-semialdehyde [(S)-ASA] and pyruvate to 4-hydroxy-tetrahydrodipicolinate (HTPA). The chain is 4-hydroxy-tetrahydrodipicolinate synthase from Clostridium tetani (strain Massachusetts / E88).